We begin with the raw amino-acid sequence, 414 residues long: Putative L-lactate dehydrogenase (414 aa).

The 378-residue stretch at 29 to 406 folds into the FMN hydroxy acid dehydrogenase domain; the sequence is RRLGAALTIQ…SPRHVTQLRR (378 aa). Tyrosine 55 provides a ligand contact to a 2-oxocarboxylate. FMN is bound by residues serine 137 and glutamine 159. Residue tyrosine 161 coordinates a 2-oxocarboxylate. FMN is bound at residue threonine 187. Arginine 196 is an a 2-oxocarboxylate binding site. Lysine 277 contacts FMN. Residue histidine 301 is the Proton acceptor of the active site. Arginine 304 contacts a 2-oxocarboxylate. Residues 332–336 and 355–356 contribute to the FMN site; these read DTGIM and GR.

This sequence belongs to the FMN-dependent alpha-hydroxy acid dehydrogenase family. The cofactor is FMN.

The catalysed reaction is (S)-lactate + A = pyruvate + AH2. The polypeptide is Putative L-lactate dehydrogenase (lldD) (Mycobacterium tuberculosis (strain ATCC 25618 / H37Rv)).